Consider the following 242-residue polypeptide: Methylthioribulose-1-phosphate dehydratase (242 aa).

The segment covering 1–11 (MAQEIQKENND) has biased composition (basic and acidic residues). The tract at residues 1-20 (MAQEIQKENNDHLVQSSDPE) is disordered. Cys100 is a binding site for substrate. His117 and His119 together coordinate Zn(2+). Glu146 functions as the Proton donor/acceptor in the catalytic mechanism. Zn(2+) is bound at residue His202.

The protein belongs to the aldolase class II family. MtnB subfamily. Requires Zn(2+) as cofactor.

It localises to the cytoplasm. It catalyses the reaction 5-(methylsulfanyl)-D-ribulose 1-phosphate = 5-methylsulfanyl-2,3-dioxopentyl phosphate + H2O. The protein operates within amino-acid biosynthesis; L-methionine biosynthesis via salvage pathway; L-methionine from S-methyl-5-thio-alpha-D-ribose 1-phosphate: step 2/6. Catalyzes the dehydration of methylthioribulose-1-phosphate (MTRu-1-P) into 2,3-diketo-5-methylthiopentyl-1-phosphate (DK-MTP-1-P). The sequence is that of Methylthioribulose-1-phosphate dehydratase from Aspergillus niger (strain ATCC MYA-4892 / CBS 513.88 / FGSC A1513).